Reading from the N-terminus, the 292-residue chain is Coiled-coil domain-containing protein 137 (292 aa).

Positions 1–16 (MAGLRRGAAAVAPAGT) are enriched in low complexity. 4 disordered regions span residues 1–94 (MAGL…AQAA), 139–183 (FLSK…EKAA), 205–243 (PELTAKPRMSVSRDQPGKKSLMLKKLLSPGSVSQPLTTS), and 263–292 (ALKRLQQQRQETQSPQPPHLPPGKKPEMQL). Basic and acidic residues-rich tracts occupy residues 57–78 (KNQDEQEIPFRLREIMRSRQEM), 155–164 (PKKEKSERKK), and 173–183 (KARQRREEKAA). The stretch at 156–194 (KKEKSERKKAFQKRRLDKARQRREEKAAERLEQELLQDT) forms a coiled coil. Positions 222–232 (KKSLMLKKLLS) are enriched in low complexity. Ser232 bears the Phosphoserine mark. Polar residues predominate over residues 234–243 (GSVSQPLTTS). A coiled-coil region spans residues 247–276 (QRIVAEERERAVNAYRALKRLQQQRQETQS).

The protein resides in the chromosome. This is Coiled-coil domain-containing protein 137 (CCDC137) from Bos taurus (Bovine).